Reading from the N-terminus, the 709-residue chain is Elongation factor G (709 aa).

A tr-type G domain is found at 8 to 297 (ANTRNIGIMA…AVIDYLPSPL (290 aa)). GTP is bound by residues 17-24 (AHVDAGKT), 81-85 (DTPGH), and 135-138 (NKMD).

The protein belongs to the TRAFAC class translation factor GTPase superfamily. Classic translation factor GTPase family. EF-G/EF-2 subfamily.

Its subcellular location is the cytoplasm. Catalyzes the GTP-dependent ribosomal translocation step during translation elongation. During this step, the ribosome changes from the pre-translocational (PRE) to the post-translocational (POST) state as the newly formed A-site-bound peptidyl-tRNA and P-site-bound deacylated tRNA move to the P and E sites, respectively. Catalyzes the coordinated movement of the two tRNA molecules, the mRNA and conformational changes in the ribosome. This Lactococcus lactis subsp. lactis (strain IL1403) (Streptococcus lactis) protein is Elongation factor G.